Here is a 294-residue protein sequence, read N- to C-terminus: Cytidine deaminase (294 aa).

2 consecutive CMP/dCMP-type deaminase domains span residues 48–168 (DEDA…FGPK) and 186–294 (LTGD…VLLG). A substrate-binding site is contributed by 89-91 (NME). Histidine 102 is a Zn(2+) binding site. Glutamate 104 serves as the catalytic Proton donor. 2 residues coordinate Zn(2+): cysteine 129 and cysteine 132.

Belongs to the cytidine and deoxycytidylate deaminase family. As to quaternary structure, homodimer. It depends on Zn(2+) as a cofactor.

The enzyme catalyses cytidine + H2O + H(+) = uridine + NH4(+). It catalyses the reaction 2'-deoxycytidine + H2O + H(+) = 2'-deoxyuridine + NH4(+). Functionally, this enzyme scavenges exogenous and endogenous cytidine and 2'-deoxycytidine for UMP synthesis. In Salmonella enteritidis PT4 (strain P125109), this protein is Cytidine deaminase.